We begin with the raw amino-acid sequence, 1593 residues long: Laminin subunit gamma-1 (1593 aa).

A signal peptide spans 1–19; the sequence is MSLFSCLLLWTLWAACSHG. Positions 30 to 269 constitute a Laminin N-terminal domain; the sequence is RPQRCMPEFV…AISDFAVGGR (240 aa). N-linked (GlcNAc...) asparagine glycosylation is found at Asn-44 and Asn-118. 16 disulfide bridges follow: Cys-270-Cys-279, Cys-272-Cys-289, Cys-291-Cys-300, Cys-303-Cys-323, Cys-326-Cys-335, Cys-328-Cys-351, Cys-354-Cys-363, Cys-366-Cys-379, Cys-382-Cys-394, Cys-384-Cys-400, Cys-402-Cys-411, Cys-414-Cys-426, Cys-429-Cys-440, Cys-431-Cys-447, Cys-449-Cys-458, and Cys-461-Cys-476. Laminin EGF-like domains are found at residues 270-325, 326-381, 382-428, and 429-478; these read CKCN…ECLP, CNCN…RCLS, CGCN…GCRP, and CSCN…GCTP. The 169-residue stretch at 505–673 folds into the Laminin IV type A domain; the sequence is RDDEGWKGKQ…PGTPARWVEK (169 aa). N-linked (GlcNAc...) asparagine glycans are attached at residues Asn-560, Asn-634, and Asn-654. 24 cysteine pairs are disulfide-bonded: Cys-708-Cys-717, Cys-710-Cys-724, Cys-726-Cys-735, Cys-738-Cys-754, Cys-757-Cys-765, Cys-759-Cys-776, Cys-779-Cys-788, Cys-791-Cys-809, Cys-812-Cys-826, Cys-814-Cys-833, Cys-836-Cys-845, Cys-848-Cys-865, Cys-868-Cys-882, Cys-870-Cys-889, Cys-891-Cys-900, Cys-903-Cys-916, Cys-919-Cys-931, Cys-921-Cys-938, Cys-940-Cys-949, Cys-952-Cys-964, Cys-967-Cys-979, Cys-969-Cys-985, Cys-987-Cys-996, and Cys-999-Cys-1012. 6 consecutive Laminin EGF-like domains span residues 708–756, 757–811, 812–867, 868–918, 919–966, and 967–1014; these read CNCN…DCKA, CPCP…ACRA, CSCN…KCKP, CKCS…GCER, CNCN…GCKP, and CDCD…GCQQ. N-linked (GlcNAc...) asparagine glycosylation is found at Asn-1006, Asn-1091, Asn-1159, Asn-1189, Asn-1207, Asn-1254, Asn-1364, and Asn-1379. The tract at residues 1014–1593 is domain II and I; the sequence is QCPNCYSLVR…CFNTPSLERP (580 aa). A coiled-coil region spans residues 1021–1580; the sequence is LVRDKVNQQR…ANLNDIKNTL (560 aa).

Laminin is a complex glycoprotein, consisting of three different polypeptide chains (alpha, beta, gamma), which are bound to each other by disulfide bonds into a cross-shaped molecule comprising one long and three short arms with globules at each end.

The protein resides in the secreted. The protein localises to the extracellular space. Its subcellular location is the extracellular matrix. It is found in the basement membrane. Its function is as follows. Binding to cells via a high affinity receptor, laminin is thought to mediate the attachment, migration and organization of cells into tissues during embryonic development by interacting with other extracellular matrix components. This Danio rerio (Zebrafish) protein is Laminin subunit gamma-1 (lamc1).